The chain runs to 396 residues: Probable sugar efflux transporter (396 aa).

Helical transmembrane passes span 15–35 (VVTL…PVGL), 50–70 (VGIM…PFML), 81–101 (LICL…AWNF), 103–123 (VLVI…SITA), 136–156 (AQAL…GLPI), 169–189 (TFFA…KLLP), 209–229 (PALM…YTAY), 246–266 (FATV…LVFG), 275–295 (LLVS…LPAA), 301–321 (LALL…GMQV), 333–353 (VAMA…ALAG), and 364–384 (TIGY…VLIF).

The protein belongs to the major facilitator superfamily. SotB (TC 2.A.1.2) family.

Its subcellular location is the cell inner membrane. Involved in the efflux of sugars. The physiological role may be the reduction of the intracellular concentration of toxic sugars or sugar metabolites. The chain is Probable sugar efflux transporter from Salmonella arizonae (strain ATCC BAA-731 / CDC346-86 / RSK2980).